Here is a 615-residue protein sequence, read N- to C-terminus: Protein PSK SIMULATOR 2 (615 aa).

Glycine 2 carries N-myristoyl glycine lipidation. Basic and acidic residues predominate over residues 16–27 (KKLRSNDDDKSR). 2 disordered regions span residues 16 to 59 (KKLR…KSSK) and 506 to 529 (AHGV…SNTQ). Residues 42 to 52 (SDSYYSDNYGG) are compositionally biased toward low complexity. The segment covering 512–529 (QETNHVSPPNNRTISNTQ) has biased composition (polar residues).

The protein resides in the nucleus. Functionally, promotes seedling growth probably via the regulation of phytosulfokine (PSK) signaling; PSK are peptide phytohormones acting as growth factors. Involved in PSK-induced root growth. Together with PSI1 and PSI3, required during vegetative growth and reproduction. This chain is Protein PSK SIMULATOR 2, found in Arabidopsis thaliana (Mouse-ear cress).